The primary structure comprises 149 residues: Lipoprotein MlpF (149 aa).

Positions 1–17 are cleaved as a signal peptide; the sequence is MKIINILFCLFLLLLNS. Residue C18 is the site of N-palmitoyl cysteine attachment. A lipid anchor (S-diacylglycerol cysteine) is attached at C18. A disordered region spans residues 26 to 58; the sequence is LKNNAQQTKSRGKRDLTQKEATPEKPKSKEELL. The segment covering 38 to 58 has biased composition (basic and acidic residues); sequence KRDLTQKEATPEKPKSKEELL.

This sequence belongs to the Multicopy lipoprotein (Mlp) family.

The protein localises to the cell outer membrane. In terms of biological role, an outer membrane protein that may participate in pathogenesis. Some human Lyme disease patients have antibodies against this protein. The Mlp proteins probably undergo intragenic recombination, generating new alleles. In Borreliella burgdorferi (strain ATCC 35210 / DSM 4680 / CIP 102532 / B31) (Borrelia burgdorferi), this protein is Lipoprotein MlpF.